The primary structure comprises 473 residues: ATP synthase subunit beta (473 aa).

Position 153 to 160 (153 to 160 (GGAGVGKT)) interacts with ATP.

This sequence belongs to the ATPase alpha/beta chains family. In terms of assembly, F-type ATPases have 2 components, CF(1) - the catalytic core - and CF(0) - the membrane proton channel. CF(1) has five subunits: alpha(3), beta(3), gamma(1), delta(1), epsilon(1). CF(0) has three main subunits: a(1), b(2) and c(9-12). The alpha and beta chains form an alternating ring which encloses part of the gamma chain. CF(1) is attached to CF(0) by a central stalk formed by the gamma and epsilon chains, while a peripheral stalk is formed by the delta and b chains.

It localises to the cell inner membrane. It catalyses the reaction ATP + H2O + 4 H(+)(in) = ADP + phosphate + 5 H(+)(out). Produces ATP from ADP in the presence of a proton gradient across the membrane. The catalytic sites are hosted primarily by the beta subunits. This is ATP synthase subunit beta from Rickettsia bellii (strain OSU 85-389).